Consider the following 398-residue polypeptide: 1-deoxy-D-xylulose 5-phosphate reductoisomerase (398 aa).

T11, G12, S13, I14, R38, N39, and N125 together coordinate NADPH. A 1-deoxy-D-xylulose 5-phosphate-binding site is contributed by K126. NADPH is bound at residue E127. D151 serves as a coordination point for Mn(2+). 1-deoxy-D-xylulose 5-phosphate is bound by residues S152, E153, S179, and H202. Residue E153 participates in Mn(2+) binding. NADPH is bound at residue G208. Positions 215, 220, 221, and 224 each coordinate 1-deoxy-D-xylulose 5-phosphate. E224 provides a ligand contact to Mn(2+).

Belongs to the DXR family. Mg(2+) serves as cofactor. Requires Mn(2+) as cofactor.

It catalyses the reaction 2-C-methyl-D-erythritol 4-phosphate + NADP(+) = 1-deoxy-D-xylulose 5-phosphate + NADPH + H(+). It participates in isoprenoid biosynthesis; isopentenyl diphosphate biosynthesis via DXP pathway; isopentenyl diphosphate from 1-deoxy-D-xylulose 5-phosphate: step 1/6. In terms of biological role, catalyzes the NADPH-dependent rearrangement and reduction of 1-deoxy-D-xylulose-5-phosphate (DXP) to 2-C-methyl-D-erythritol 4-phosphate (MEP). The chain is 1-deoxy-D-xylulose 5-phosphate reductoisomerase from Burkholderia vietnamiensis (strain G4 / LMG 22486) (Burkholderia cepacia (strain R1808)).